The chain runs to 67 residues: Peptide Hp1036 (67 aa).

An N-terminal signal peptide occupies residues 1-23; the sequence is MKTQFAILLITLVLFQMFSQSDA. Phe36 carries the post-translational modification Phenylalanine amide. A propeptide spanning residues 40 to 67 is cleaved from the precursor; sequence GLNDLSDLDELFDGEISEADVDFLREIM.

This sequence belongs to the non-disulfide-bridged peptide (NDBP) superfamily. Short antimicrobial peptide (group 4) family. In terms of tissue distribution, expressed by the venom gland.

The protein resides in the secreted. It is found in the target cell membrane. In terms of biological role, amphipathic peptide with antibacterial activities. Shows antiviral activities against the herpes simplex virus type-1. It potently inhibits the initial infection by provoking the rupture of viral envelop and the dissociation of proteins from the virions (EC(50) is 0.43 uM). It also effectively inhibits viral attachment (EC(50) is 2.87 uM), viral entry (EC(50) is 4.29 uM) and viral proliferation after infection (EC(50) is 7.86). Morever, it enters mammalian tested cells (Vero) and reduces the intracellular infectivity. The protein is Peptide Hp1036 of Heterometrus petersii (Asian forest scorpion).